We begin with the raw amino-acid sequence, 923 residues long: Isoleucine--tRNA ligase (923 aa).

Positions 57 to 67 (PYANGDIHMGH) match the 'HIGH' region motif. Glu-553 lines the L-isoleucyl-5'-AMP pocket. The 'KMSKS' region signature appears at 594 to 598 (KMSKS). Lys-597 lines the ATP pocket. Cys-888, Cys-891, Cys-908, and Cys-911 together coordinate Zn(2+).

The protein belongs to the class-I aminoacyl-tRNA synthetase family. IleS type 1 subfamily. In terms of assembly, monomer. Zn(2+) is required as a cofactor.

The protein resides in the cytoplasm. It catalyses the reaction tRNA(Ile) + L-isoleucine + ATP = L-isoleucyl-tRNA(Ile) + AMP + diphosphate. Catalyzes the attachment of isoleucine to tRNA(Ile). As IleRS can inadvertently accommodate and process structurally similar amino acids such as valine, to avoid such errors it has two additional distinct tRNA(Ile)-dependent editing activities. One activity is designated as 'pretransfer' editing and involves the hydrolysis of activated Val-AMP. The other activity is designated 'posttransfer' editing and involves deacylation of mischarged Val-tRNA(Ile). The polypeptide is Isoleucine--tRNA ligase (Shouchella clausii (strain KSM-K16) (Alkalihalobacillus clausii)).